The chain runs to 162 residues: Protein archease (162 aa).

Ca(2+) is bound by residues Asp-34, Asp-161, and Ile-162.

This sequence belongs to the archease family. Component of the tRNA-splicing ligase complex.

Its function is as follows. Component of the tRNA-splicing ligase complex required to facilitate the enzymatic turnover of catalytic subunit RTCB. Together with ddx1, acts by facilitating the guanylylation of RTCB, a key intermediate step in tRNA ligation. The chain is Protein archease from Ictalurus punctatus (Channel catfish).